The chain runs to 615 residues: DNA mismatch repair protein MutL (615 aa).

Residues Glu-370–Tyr-397 form a disordered region. A compositionally biased stretch (low complexity) spans Pro-378–Pro-391.

The protein belongs to the DNA mismatch repair MutL/HexB family.

Its function is as follows. This protein is involved in the repair of mismatches in DNA. It is required for dam-dependent methyl-directed DNA mismatch repair. May act as a 'molecular matchmaker', a protein that promotes the formation of a stable complex between two or more DNA-binding proteins in an ATP-dependent manner without itself being part of a final effector complex. This is DNA mismatch repair protein MutL from Shigella dysenteriae serotype 1 (strain Sd197).